Reading from the N-terminus, the 210-residue chain is Large ribosomal subunit protein uL4 (210 aa).

Polar residues predominate over residues 47–64; the sequence is SRQGTRSQKSRSEVSGSN. The interval 47-83 is disordered; sequence SRQGTRSQKSRSEVSGSNKKPWRQKGTGRARSGSVKS.

This sequence belongs to the universal ribosomal protein uL4 family. In terms of assembly, part of the 50S ribosomal subunit.

Functionally, one of the primary rRNA binding proteins, this protein initially binds near the 5'-end of the 23S rRNA. It is important during the early stages of 50S assembly. It makes multiple contacts with different domains of the 23S rRNA in the assembled 50S subunit and ribosome. Forms part of the polypeptide exit tunnel. The chain is Large ribosomal subunit protein uL4 from Blochmanniella pennsylvanica (strain BPEN).